The sequence spans 472 residues: Protein c-ets-2-B (472 aa).

In terms of domain architecture, PNT spans 85 to 170 (DTFNGFAKER…EHLEEMMKEY (86 aa)). A DNA-binding region (ETS) is located at residues 366 to 446 (IQLWQFLLEL…SGKRYVYRFV (81 aa)).

It belongs to the ETS family.

Its subcellular location is the nucleus. Its function is as follows. Probable transcription factor. The chain is Protein c-ets-2-B (ets2-b) from Xenopus laevis (African clawed frog).